We begin with the raw amino-acid sequence, 485 residues long: MFLTSVLILCSLAALSLGQKNNNFAPGRNTIVHLFEWHWDDIANECENFLGPKGFAGVQISPPAENTVIGDRPWWERYQPISYALNTRSGDESALASMIRRCNNAGVRIYVDAVFNHMSATSGIGTGGSSCDVEPSASPAVPYGSGDFHGRCTSNNYQDPNNIRNCWLSGLPDLDQSKDYVRDKILEYLNHLVDLGVAGFRVDAAKHMWPADLQVIYGRVKDLNTDHGFSQGSRPFFYQEVIDLGGEGVSKNEYTGFGTVLEFKYGTELGNAFQGNNALHNLENWGPAWGLLEGTDAVVFIDNHDNQRTGSGAILTYKNPRPYKMAIGFMLAHPYGTTRIMSSFSFDYNDQGPPTQGPGFNSVRNLHQWVGGANTGWRQILRVMVGFRNAVDGTSISNWWSDGNQQIAFGRGDKGFVAFTLAGDINGNLQTSLPAGSYCDIVSGKLENGSCTGKTVNVDGNGQAYITLSSGEDDGFLAIHVGAKV.

A signal peptide spans 1–18 (MFLTSVLILCSLAALSLG). At Gln-19 the chain carries Pyrrolidone carboxylic acid. Cys-46 and Cys-102 are oxidised to a cystine. Ca(2+) is bound by residues Asn-116, Arg-164, and Asp-173. The cysteines at positions 152 and 166 are disulfide-linked. Residue Arg-201 coordinates chloride. Residue Asp-203 is the Nucleophile of the active site. His-207 contacts Ca(2+). Catalysis depends on Glu-240, which acts as the Proton donor. Residues Asn-303 and Arg-339 each contribute to the chloride site. Cys-439 and Cys-451 form a disulfide bridge. A glycan (N-linked (GlcNAc...) asparagine) is linked at Asn-448.

Belongs to the glycosyl hydrolase 13 family. In terms of assembly, monomer. Requires Ca(2+) as cofactor. Chloride serves as cofactor. In terms of tissue distribution, expressed in larval and adult gut.

The protein localises to the secreted. It catalyses the reaction Endohydrolysis of (1-&gt;4)-alpha-D-glucosidic linkages in polysaccharides containing three or more (1-&gt;4)-alpha-linked D-glucose units.. This Phaedon cochleariae (Mustard beetle) protein is Alpha-amylase.